The chain runs to 304 residues: GTP cyclohydrolase FolE2 (304 aa).

Belongs to the GTP cyclohydrolase IV family.

The enzyme catalyses GTP + H2O = 7,8-dihydroneopterin 3'-triphosphate + formate + H(+). Its pathway is cofactor biosynthesis; 7,8-dihydroneopterin triphosphate biosynthesis; 7,8-dihydroneopterin triphosphate from GTP: step 1/1. Converts GTP to 7,8-dihydroneopterin triphosphate. The chain is GTP cyclohydrolase FolE2 from Bdellovibrio bacteriovorus (strain ATCC 15356 / DSM 50701 / NCIMB 9529 / HD100).